The following is a 231-amino-acid chain: Lipoprotein-releasing system ATP-binding protein LolD (231 aa).

Residues 6–231 (LQVQAVSKSY…YLQAVAEHAQ (226 aa)) enclose the ABC transporter domain. 42–49 (GTSGSGKS) is an ATP binding site.

Belongs to the ABC transporter superfamily. Lipoprotein translocase (TC 3.A.1.125) family. The complex is composed of two ATP-binding proteins (LolD) and two transmembrane proteins (LolC and LolE).

It is found in the cell inner membrane. Part of the ABC transporter complex LolCDE involved in the translocation of mature outer membrane-directed lipoproteins, from the inner membrane to the periplasmic chaperone, LolA. Responsible for the formation of the LolA-lipoprotein complex in an ATP-dependent manner. The polypeptide is Lipoprotein-releasing system ATP-binding protein LolD (Shewanella sp. (strain MR-7)).